The chain runs to 119 residues: DNA-binding protein Maeo_0998 (119 aa).

Residues 1–11 show a composition bias toward basic and acidic residues; sequence MDIEEIKRQKM. The disordered stretch occupies residues 1–36; sequence MDIEEIKRQKMMELQQQQAQGAPNPEEIQQQQEQER. Residues 15 to 32 are compositionally biased toward low complexity; it reads QQQQAQGAPNPEEIQQQQ.

This sequence belongs to the PDCD5 family.

This chain is DNA-binding protein Maeo_0998, found in Methanococcus aeolicus (strain ATCC BAA-1280 / DSM 17508 / OCM 812 / Nankai-3).